Here is a 346-residue protein sequence, read N- to C-terminus: Biotin synthase (346 aa).

Residues 38-256 (QQVQVSTLLS…IAVARIMMPT (219 aa)) form the Radical SAM core domain. [4Fe-4S] cluster contacts are provided by Cys-53, Cys-57, and Cys-60. The [2Fe-2S] cluster site is built by Cys-97, Cys-128, Cys-188, and Arg-260.

Belongs to the radical SAM superfamily. Biotin synthase family. Homodimer. The cofactor is [4Fe-4S] cluster. [2Fe-2S] cluster is required as a cofactor.

It carries out the reaction (4R,5S)-dethiobiotin + (sulfur carrier)-SH + 2 reduced [2Fe-2S]-[ferredoxin] + 2 S-adenosyl-L-methionine = (sulfur carrier)-H + biotin + 2 5'-deoxyadenosine + 2 L-methionine + 2 oxidized [2Fe-2S]-[ferredoxin]. It functions in the pathway cofactor biosynthesis; biotin biosynthesis; biotin from 7,8-diaminononanoate: step 2/2. Its function is as follows. Catalyzes the conversion of dethiobiotin (DTB) to biotin by the insertion of a sulfur atom into dethiobiotin via a radical-based mechanism. In Salmonella choleraesuis (strain SC-B67), this protein is Biotin synthase.